Reading from the N-terminus, the 321-residue chain is Lipoyl synthase (321 aa).

Positions 68, 73, 79, 94, 98, 101, and 308 each coordinate [4Fe-4S] cluster. Residues 80–297 (FNHGTATFMI…KEIALELGFT (218 aa)) form the Radical SAM core domain.

This sequence belongs to the radical SAM superfamily. Lipoyl synthase family. The cofactor is [4Fe-4S] cluster.

Its subcellular location is the cytoplasm. It catalyses the reaction [[Fe-S] cluster scaffold protein carrying a second [4Fe-4S](2+) cluster] + N(6)-octanoyl-L-lysyl-[protein] + 2 oxidized [2Fe-2S]-[ferredoxin] + 2 S-adenosyl-L-methionine + 4 H(+) = [[Fe-S] cluster scaffold protein] + N(6)-[(R)-dihydrolipoyl]-L-lysyl-[protein] + 4 Fe(3+) + 2 hydrogen sulfide + 2 5'-deoxyadenosine + 2 L-methionine + 2 reduced [2Fe-2S]-[ferredoxin]. The protein operates within protein modification; protein lipoylation via endogenous pathway; protein N(6)-(lipoyl)lysine from octanoyl-[acyl-carrier-protein]: step 2/2. In terms of biological role, catalyzes the radical-mediated insertion of two sulfur atoms into the C-6 and C-8 positions of the octanoyl moiety bound to the lipoyl domains of lipoate-dependent enzymes, thereby converting the octanoylated domains into lipoylated derivatives. The protein is Lipoyl synthase of Vibrio vulnificus (strain CMCP6).